A 547-amino-acid chain; its full sequence is Chaperonin GroEL (547 aa).

ATP-binding positions include 30–33 (TLGP), Lys-51, 87–91 (DGTTT), Gly-415, 479–481 (NAA), and Asp-495.

The protein belongs to the chaperonin (HSP60) family. As to quaternary structure, forms a cylinder of 14 subunits composed of two heptameric rings stacked back-to-back. Interacts with the co-chaperonin GroES.

The protein localises to the cytoplasm. It carries out the reaction ATP + H2O + a folded polypeptide = ADP + phosphate + an unfolded polypeptide.. Its function is as follows. Together with its co-chaperonin GroES, plays an essential role in assisting protein folding. The GroEL-GroES system forms a nano-cage that allows encapsulation of the non-native substrate proteins and provides a physical environment optimized to promote and accelerate protein folding. This Cupriavidus pinatubonensis (strain JMP 134 / LMG 1197) (Cupriavidus necator (strain JMP 134)) protein is Chaperonin GroEL.